A 201-amino-acid chain; its full sequence is B-cell CLL/lymphoma 7 protein family member B-B (201 aa).

The interval 104–201 is disordered; that stretch reads QSNTKVDSSS…VCTEHNSTVS (98 aa).

The protein belongs to the BCL7 family.

The chain is B-cell CLL/lymphoma 7 protein family member B-B from Danio rerio (Zebrafish).